The primary structure comprises 352 residues: MSNSAVSSADSIKLTEYSHGAGCGCKISPKVLTTILASQLPVFTDPNLLVGNQSRDDAAVYKLNDEIGIISTTDFFMPIVDDPFTFGRIAATNAISDIYAMGGTPMMAIAILGWPVNKLPAEIAQQVVDGGRQACMEAGIMLAGGHSIDAPEPIFGLAVTGQIALTDLKQNDTAKAGDRLYLTKPIGIGILTTAQKQKKLKDEDSQIAVNAMCQLNSIGAKIAKITGVNALTDVTGFGLAGHLLEVCQGAKLTAKLDLDSVPLLPRALDYLAQGCIPGGTHRNYDSYGEHLPALTDHQKAILCDPQTSGGLLVAVSSEAEAELVALLNAHQIEPICIGSLETPTSTANVVLC.

The active site involves cysteine 23. Residues lysine 26 and 54–56 contribute to the ATP site; that span reads SRD. Aspartate 57 contributes to the Mg(2+) binding site. Residues aspartate 74, aspartate 97, and 145-147 each bind ATP; that span reads GHS. Mg(2+) is bound at residue aspartate 97. A Mg(2+)-binding site is contributed by aspartate 233.

Belongs to the selenophosphate synthase 1 family. Class I subfamily. Homodimer. The cofactor is Mg(2+).

It carries out the reaction hydrogenselenide + ATP + H2O = selenophosphate + AMP + phosphate + 2 H(+). In terms of biological role, synthesizes selenophosphate from selenide and ATP. The protein is Selenide, water dikinase of Shewanella sp. (strain MR-7).